We begin with the raw amino-acid sequence, 1123 residues long: Adenylyl cyclase X E (1123 aa).

The Cytoplasmic segment spans residues 1 to 47 (MPRSLGNCQLNYSKERMWEPGYLKAKCAELRLESEFRLYRIRLWKSY). A helical transmembrane segment spans residues 48–68 (LLTFFMLHIFVTSVHCALLLA). The Extracellular segment spans residues 69 to 73 (TIERR). Residues 74 to 94 (SIIYFDVALSIGCALVLILVL) form a helical membrane-spanning segment. The Cytoplasmic segment spans residues 95-106 (SVNFCDEFIAKH). Residues 107–127 (TWYMYASSIFASLTLVFADLT) form a helical membrane-spanning segment. Residues 128–137 (ESIYHTYAHS) lie on the Extracellular side of the membrane. Residues 138-158 (WILGTFYDTYIIYMIYMFLPI) form a helical membrane-spanning segment. Over 159 to 163 (HFISG) the chain is Cytoplasmic. Residues 164 to 184 (AVLLALLVSGLYILYFVIFIA) form a helical membrane-spanning segment. The Extracellular portion of the chain corresponds to 185–196 (QGFAQFASALFS). A helical membrane pass occupies residues 197 to 217 (VGGMSVDIVHYLCLNLVGIFY). Over 218–581 (RVMNDTVVRS…YLKQTDYMYK (364 aa)) the chain is Cytoplasmic. ATP is bound by residues 346–348 (LGD) and Arg-392. Asp-348 is a Mg(2+) binding site. Residues 582-602 (YSIILSASVGCSLVYIELMDT) form a helical membrane-spanning segment. Residues 603–608 (QMICSS) are Extracellular-facing. Residues 609–629 (CFVLPASVATIQCILALIAWY) traverse the membrane as a helical segment. Residues 630–667 (KKYCWTRYGRNNVPHHYNGFSCFIFRIHDKILNSLPIR) are Cytoplasmic-facing. Residues 668 to 688 (ICIYLFLMISSFFVMCLIVMS) traverse the membrane as a helical segment. The Extracellular segment spans residues 689-719 (CQREEFEMAYIEERLFHYEQEAHICFHPWVT). The helical transmembrane segment at 720–740 (TNMLSLMICLTFTFAHIPIMV) threads the bilayer. The Cytoplasmic segment spans residues 741 to 743 (KTA). The chain crosses the membrane as a helical span at residues 744 to 764 (VAILETLAYLLLIFFQFDFVF). Residues 765-772 (HHSVTTNP) are Extracellular-facing. Residues 773–793 (YFKSEYAHALLICITFLIMFV) traverse the membrane as a helical segment. Topologically, residues 794–1123 (KERQIEFTNK…STSRHTLQSL (330 aa)) are cytoplasmic. Residues Lys-903, 1014–1016 (DIW), 1021–1025 (NMASR), and Lys-1061 each bind ATP.

It belongs to the adenylyl cyclase class-4/guanylyl cyclase family. Expressed in labella.

It is found in the membrane. It catalyses the reaction ATP = 3',5'-cyclic AMP + diphosphate. In terms of biological role, catalyzes the formation of the signaling molecule cAMP in response to G-protein signaling. The protein is Adenylyl cyclase X E of Drosophila melanogaster (Fruit fly).